We begin with the raw amino-acid sequence, 112 residues long: Nucleoid-associated protein BCI_0116 (112 aa).

It belongs to the YbaB/EbfC family. Homodimer.

The protein localises to the cytoplasm. It is found in the nucleoid. Its function is as follows. Binds to DNA and alters its conformation. May be involved in regulation of gene expression, nucleoid organization and DNA protection. This Baumannia cicadellinicola subsp. Homalodisca coagulata protein is Nucleoid-associated protein BCI_0116.